Reading from the N-terminus, the 417-residue chain is Serine hydroxymethyltransferase 2 (417 aa).

Residues L121 and 125 to 127 (GHL) contribute to the (6S)-5,6,7,8-tetrahydrofolate site. K229 is subject to N6-(pyridoxal phosphate)lysine. Residue 354–356 (SPF) coordinates (6S)-5,6,7,8-tetrahydrofolate.

The protein belongs to the SHMT family. Homodimer. It depends on pyridoxal 5'-phosphate as a cofactor.

The protein localises to the cytoplasm. The enzyme catalyses (6R)-5,10-methylene-5,6,7,8-tetrahydrofolate + glycine + H2O = (6S)-5,6,7,8-tetrahydrofolate + L-serine. The protein operates within one-carbon metabolism; tetrahydrofolate interconversion. Its pathway is amino-acid biosynthesis; glycine biosynthesis; glycine from L-serine: step 1/1. In terms of biological role, catalyzes the reversible interconversion of serine and glycine with tetrahydrofolate (THF) serving as the one-carbon carrier. This reaction serves as the major source of one-carbon groups required for the biosynthesis of purines, thymidylate, methionine, and other important biomolecules. Also exhibits THF-independent aldolase activity toward beta-hydroxyamino acids, producing glycine and aldehydes, via a retro-aldol mechanism. The protein is Serine hydroxymethyltransferase 2 of Pseudomonas putida (strain ATCC 47054 / DSM 6125 / CFBP 8728 / NCIMB 11950 / KT2440).